The primary structure comprises 428 residues: MTEAVPTDSVDSKASSQVNSAENPFPVRAVALRIAGWIDKLGTVWVEGQLAQITMRPNAKTVFMVLRDPAADISLIVTCSRDFVLRAPVKLAEGIQVVVCGKPSFYIGRGTFSLRLSDIRAVGIGELLVRIDRLRRLLDSEGLFDPRLKRPIPFLPNMIGIITGRASAAERDVTTVASARWPAARFAIRNTAVQGPNAVSQIVEALRELDRNVDVEVIVVARGGGSVEDLLTFSDETLCRAIAACRTPVISAVGHEPDNPLCDLVADLRAATPTDAAKKVVPDAAVEQRLIEDLQRRSAQALRNWVSREQRTLVQLRSRPVLAEPLRTLTTRSEEIHRAQSAIRREIIRLVTTETERVGHLATQLATLGPAATLARGYAIVQALEDGTQTVTAAVLRSVDDAPTGTRLRVRVSDGAIVAVSEGRADGP.

This sequence belongs to the XseA family. As to quaternary structure, heterooligomer composed of large and small subunits.

Its subcellular location is the cytoplasm. It catalyses the reaction Exonucleolytic cleavage in either 5'- to 3'- or 3'- to 5'-direction to yield nucleoside 5'-phosphates.. Functionally, bidirectionally degrades single-stranded DNA into large acid-insoluble oligonucleotides, which are then degraded further into small acid-soluble oligonucleotides. This Mycobacterium leprae (strain TN) protein is Exodeoxyribonuclease 7 large subunit.